A 671-amino-acid polypeptide reads, in one-letter code: DNA ligase (671 aa).

Residues 32–36 (DAEYD), 81–82 (SL), and E113 each bind NAD(+). Residue K115 is the N6-AMP-lysine intermediate of the active site. Residues R136, E173, K290, and K314 each coordinate NAD(+). Positions 408, 411, 426, and 432 each coordinate Zn(2+). The 79-residue stretch at 593–671 (EIDSPFAGKT…EAEMIRLLGA (79 aa)) folds into the BRCT domain.

Belongs to the NAD-dependent DNA ligase family. LigA subfamily. The cofactor is Mg(2+). Mn(2+) serves as cofactor.

It catalyses the reaction NAD(+) + (deoxyribonucleotide)n-3'-hydroxyl + 5'-phospho-(deoxyribonucleotide)m = (deoxyribonucleotide)n+m + AMP + beta-nicotinamide D-nucleotide.. DNA ligase that catalyzes the formation of phosphodiester linkages between 5'-phosphoryl and 3'-hydroxyl groups in double-stranded DNA using NAD as a coenzyme and as the energy source for the reaction. It is essential for DNA replication and repair of damaged DNA. The polypeptide is DNA ligase (Salmonella paratyphi B (strain ATCC BAA-1250 / SPB7)).